The following is a 149-amino-acid chain: Calmodulin (149 aa).

Alanine 2 bears the N-acetylalanine mark. EF-hand domains follow at residues 8-43, 44-79, 81-116, and 117-149; these read EQIA…VGQN, PTEA…KMKD, DSEE…LGEK, and LTDE…MMSK. Ca(2+) contacts are provided by aspartate 21, aspartate 23, aspartate 25, threonine 27, glutamate 32, aspartate 57, aspartate 59, asparagine 61, threonine 63, glutamate 68, aspartate 94, aspartate 96, asparagine 98, glutamate 105, aspartate 130, aspartate 132, aspartate 134, glutamine 136, and glutamate 141.

The protein belongs to the calmodulin family.

Its function is as follows. Calmodulin mediates the control of a large number of enzymes, ion channels and other proteins by Ca(2+). Among the enzymes to be stimulated by the calmodulin-Ca(2+) complex are a number of protein kinases and phosphatases. This Achlya klebsiana protein is Calmodulin (CMD1).